Here is a 135-residue protein sequence, read N- to C-terminus: Transcription antitermination protein NusB (135 aa).

This sequence belongs to the NusB family.

In terms of biological role, involved in transcription antitermination. Required for transcription of ribosomal RNA (rRNA) genes. Binds specifically to the boxA antiterminator sequence of the ribosomal RNA (rrn) operons. The polypeptide is Transcription antitermination protein NusB (Wolinella succinogenes (strain ATCC 29543 / DSM 1740 / CCUG 13145 / JCM 31913 / LMG 7466 / NCTC 11488 / FDC 602W) (Vibrio succinogenes)).